We begin with the raw amino-acid sequence, 335 residues long: tRNA N6-adenosine threonylcarbamoyltransferase (335 aa).

Fe cation-binding residues include H111 and H115. Substrate-binding positions include 133 to 137 (LISGG), D166, G179, and N276. D301 provides a ligand contact to Fe cation.

Belongs to the KAE1 / TsaD family. It depends on Fe(2+) as a cofactor.

The protein localises to the cytoplasm. The catalysed reaction is L-threonylcarbamoyladenylate + adenosine(37) in tRNA = N(6)-L-threonylcarbamoyladenosine(37) in tRNA + AMP + H(+). Functionally, required for the formation of a threonylcarbamoyl group on adenosine at position 37 (t(6)A37) in tRNAs that read codons beginning with adenine. Is involved in the transfer of the threonylcarbamoyl moiety of threonylcarbamoyl-AMP (TC-AMP) to the N6 group of A37, together with TsaE and TsaB. TsaD likely plays a direct catalytic role in this reaction. This is tRNA N6-adenosine threonylcarbamoyltransferase from Wolbachia sp. subsp. Drosophila simulans (strain wRi).